A 401-amino-acid chain; its full sequence is L-rhamnonate dehydratase (401 aa).

Positions 29 and 55 each coordinate substrate. Positions 222, 248, and 276 each coordinate Mg(2+). Residue His325 is the Proton acceptor of the active site. Residue Glu345 participates in substrate binding.

This sequence belongs to the mandelate racemase/muconate lactonizing enzyme family. RhamD subfamily. In terms of assembly, homooctamer; tetramer of dimers. It depends on Mg(2+) as a cofactor.

It carries out the reaction L-rhamnonate = 2-dehydro-3-deoxy-L-rhamnonate + H2O. Its function is as follows. Catalyzes the dehydration of L-rhamnonate to 2-keto-3-deoxy-L-rhamnonate (KDR). Can also dehydrate L-lyxonate, L-mannonate and D-gulonate, although less efficiently, but not 2-keto-4-hydroxyheptane-1,7-dioate. This chain is L-rhamnonate dehydratase (rhmD), found in Escherichia coli (strain K12).